Consider the following 154-residue polypeptide: Superoxide dismutase [Cu-Zn] (154 aa).

Cu cation contacts are provided by His-47, His-49, and His-64. Cys-58 and Cys-147 are disulfide-bonded. Positions 64, 72, 81, and 84 each coordinate Zn(2+). His-121 provides a ligand contact to Cu cation. Residues 125 to 136 (DDLGKGGNEESL) show a composition bias toward basic and acidic residues. Positions 125–144 (DDLGKGGNEESLKTGNAGPR) are disordered. Position 144 (Arg-144) interacts with substrate.

It belongs to the Cu-Zn superoxide dismutase family. As to quaternary structure, homodimer. The cofactor is Cu cation. Requires Zn(2+) as cofactor.

The protein localises to the cytoplasm. The catalysed reaction is 2 superoxide + 2 H(+) = H2O2 + O2. Destroys radicals which are normally produced within the cells and which are toxic to biological systems. The polypeptide is Superoxide dismutase [Cu-Zn] (sod-1) (Neurospora crassa (strain ATCC 24698 / 74-OR23-1A / CBS 708.71 / DSM 1257 / FGSC 987)).